The sequence spans 342 residues: L-threonine 3-dehydrogenase (342 aa).

Cysteine 38 contacts Zn(2+). Residues threonine 40 and histidine 43 each act as charge relay system in the active site. Residues histidine 63, glutamate 64, cysteine 93, cysteine 96, cysteine 99, and cysteine 107 each contribute to the Zn(2+) site. NAD(+) contacts are provided by residues isoleucine 175, aspartate 195, arginine 200, 262 to 264 (LGI), and 286 to 287 (IY).

This sequence belongs to the zinc-containing alcohol dehydrogenase family. Homotetramer. Zn(2+) is required as a cofactor.

The protein resides in the cytoplasm. The catalysed reaction is L-threonine + NAD(+) = (2S)-2-amino-3-oxobutanoate + NADH + H(+). The protein operates within amino-acid degradation; L-threonine degradation via oxydo-reductase pathway; glycine from L-threonine: step 1/2. Catalyzes the NAD(+)-dependent oxidation of L-threonine to 2-amino-3-ketobutyrate. The polypeptide is L-threonine 3-dehydrogenase (Burkholderia cenocepacia (strain ATCC BAA-245 / DSM 16553 / LMG 16656 / NCTC 13227 / J2315 / CF5610) (Burkholderia cepacia (strain J2315))).